Consider the following 324-residue polypeptide: o-succinylbenzoate synthase (324 aa).

Residue K135 is the Proton donor of the active site. Mg(2+) is bound by residues D163, E192, and D215. K237 (proton acceptor) is an active-site residue.

Belongs to the mandelate racemase/muconate lactonizing enzyme family. MenC type 1 subfamily. The cofactor is a divalent metal cation.

It carries out the reaction (1R,6R)-6-hydroxy-2-succinyl-cyclohexa-2,4-diene-1-carboxylate = 2-succinylbenzoate + H2O. The protein operates within quinol/quinone metabolism; 1,4-dihydroxy-2-naphthoate biosynthesis; 1,4-dihydroxy-2-naphthoate from chorismate: step 4/7. It participates in quinol/quinone metabolism; menaquinone biosynthesis. In terms of biological role, converts 2-succinyl-6-hydroxy-2,4-cyclohexadiene-1-carboxylate (SHCHC) to 2-succinylbenzoate (OSB). This is o-succinylbenzoate synthase from Aliivibrio fischeri (strain ATCC 700601 / ES114) (Vibrio fischeri).